The primary structure comprises 150 residues: Ribonuclease H (150 aa).

An RNase H type-1 domain is found at 1–141 (MRPVIIHTDG…ADQLARDGLT (141 aa)). Residues aspartate 9, glutamate 47, aspartate 69, and aspartate 133 each contribute to the Mg(2+) site.

It belongs to the RNase H family. As to quaternary structure, monomer. Mg(2+) is required as a cofactor.

It is found in the cytoplasm. The catalysed reaction is Endonucleolytic cleavage to 5'-phosphomonoester.. Endonuclease that specifically degrades the RNA of RNA-DNA hybrids. This Rhodopseudomonas palustris (strain BisB5) protein is Ribonuclease H.